We begin with the raw amino-acid sequence, 255 residues long: Triosephosphate isomerase (255 aa).

9-11 (NWK) contacts substrate. Histidine 95 acts as the Electrophile in catalysis. The Proton acceptor role is filled by glutamate 167. Residues glycine 173, serine 212, and 233 to 234 (GG) each bind substrate.

This sequence belongs to the triosephosphate isomerase family. Homodimer.

It is found in the cytoplasm. It carries out the reaction D-glyceraldehyde 3-phosphate = dihydroxyacetone phosphate. Its pathway is carbohydrate biosynthesis; gluconeogenesis. It functions in the pathway carbohydrate degradation; glycolysis; D-glyceraldehyde 3-phosphate from glycerone phosphate: step 1/1. Functionally, involved in the gluconeogenesis. Catalyzes stereospecifically the conversion of dihydroxyacetone phosphate (DHAP) to D-glyceraldehyde-3-phosphate (G3P). In Photorhabdus laumondii subsp. laumondii (strain DSM 15139 / CIP 105565 / TT01) (Photorhabdus luminescens subsp. laumondii), this protein is Triosephosphate isomerase.